The chain runs to 633 residues: Replication protein E1 (633 aa).

Positions 84 to 86 (KRK) match the Nuclear localization signal motif. A phosphoserine; by host mark is found at S90, S94, and S108. The Nuclear export signal motif lies at 107-116 (LSPRLGAISL). Residues 148–168 (NTEGTDETETDQVQTVSGETT) are disordered. Residues 158-168 (DQVQTVSGETT) show a composition bias toward polar residues. Positions 169–335 (TDSLGRQQIT…QTVIEYSLAD (167 aa)) are DNA-binding region. The SF3 helicase domain occupies 434 to 584 (VDFISFMIAL…FPFDSNGNPV (151 aa)). Residue 460–467 (GPPDTGKS) coordinates ATP. K541 participates in a covalent cross-link: Glycyl lysine isopeptide (Lys-Gly) (interchain with G-Cter in SUMO). Residues 609 to 633 (DNEEEENGDPSNTFRCVPGKASRPI) are disordered.

Belongs to the papillomaviridae E1 protein family. As to quaternary structure, can form hexamers. Interacts with E2 protein; this interaction increases E1 DNA binding specificity. Interacts with host DNA polymerase subunit POLA2. Interacts with host single stranded DNA-binding protein RPA1. Interacts with host TOP1; this interaction stimulates the enzymatic activity of TOP1. Post-translationally, phosphorylated. Sumoylated.

It is found in the host nucleus. The enzyme catalyses Couples ATP hydrolysis with the unwinding of duplex DNA by translocating in the 3'-5' direction.. It catalyses the reaction ATP + H2O = ADP + phosphate + H(+). ATP-dependent DNA 3'-5' helicase required for initiation of viral DNA replication. It forms a complex with the viral E2 protein. The E1-E2 complex binds to the replication origin which contains binding sites for both proteins. During the initial step, a dimer of E1 interacts with a dimer of protein E2 leading to a complex that binds the viral origin of replication with high specificity. Then, a second dimer of E1 displaces the E2 dimer in an ATP-dependent manner to form the E1 tetramer. Following this, two E1 monomers are added to each half of the site, which results in the formation of two E1 trimers on the viral ori. Subsequently, two hexamers will be created. The double hexamer acts as a bi-directional helicase machinery and unwinds the viral DNA and then recruits the host DNA polymerase to start replication. The polypeptide is Replication protein E1 (Homo sapiens (Human)).